The sequence spans 63 residues: Large ribosomal subunit protein bL28 (63 aa).

It belongs to the bacterial ribosomal protein bL28 family.

The protein is Large ribosomal subunit protein bL28 of Alkaliphilus oremlandii (strain OhILAs) (Clostridium oremlandii (strain OhILAs)).